Here is a 189-residue protein sequence, read N- to C-terminus: Elongation factor P (189 aa).

Lysine 34 carries the post-translational modification N6-(3,6-diaminohexanoyl)-5-hydroxylysine.

Belongs to the elongation factor P family. In terms of processing, may be beta-lysylated on the epsilon-amino group of Lys-34 by the combined action of EpmA and EpmB, and then hydroxylated on the C5 position of the same residue by EpmC (if this protein is present). Lysylation is critical for the stimulatory effect of EF-P on peptide-bond formation. The lysylation moiety may extend toward the peptidyltransferase center and stabilize the terminal 3-CCA end of the tRNA. Hydroxylation of the C5 position on Lys-34 may allow additional potential stabilizing hydrogen-bond interactions with the P-tRNA.

It is found in the cytoplasm. It participates in protein biosynthesis; polypeptide chain elongation. Functionally, involved in peptide bond synthesis. Alleviates ribosome stalling that occurs when 3 or more consecutive Pro residues or the sequence PPG is present in a protein, possibly by augmenting the peptidyl transferase activity of the ribosome. Modification of Lys-34 is required for alleviation. This is Elongation factor P from Alkalilimnicola ehrlichii (strain ATCC BAA-1101 / DSM 17681 / MLHE-1).